We begin with the raw amino-acid sequence, 312 residues long: Apulose-4-phosphate transketolase subunit B (312 aa).

The protein belongs to the transketolase family. In terms of assembly, probable heterodimer composed of AptA and AptB. Requires thiamine diphosphate as cofactor.

The catalysed reaction is apulose 4-phosphate + D-glyceraldehyde 3-phosphate = D-xylulose 5-phosphate + dihydroxyacetone phosphate. Its pathway is carbohydrate metabolism. Its function is as follows. Involved in catabolism of D-apiose. Catalyzes the transfer of the glycolaldehyde group from apulose-4-phosphate to D-glyceraldehyde 3-phosphate, generating dihydroxyacetone phosphate and D-xylulose-5-phosphate. This chain is Apulose-4-phosphate transketolase subunit B, found in Phocaeicola vulgatus (strain ATCC 8482 / DSM 1447 / JCM 5826 / CCUG 4940 / NBRC 14291 / NCTC 11154) (Bacteroides vulgatus).